The primary structure comprises 207 residues: Ribosomal RNA small subunit methyltransferase G (207 aa).

S-adenosyl-L-methionine-binding positions include G74, L79, 125-126 (VE), and R140.

The protein belongs to the methyltransferase superfamily. RNA methyltransferase RsmG family.

The protein resides in the cytoplasm. The catalysed reaction is guanosine(527) in 16S rRNA + S-adenosyl-L-methionine = N(7)-methylguanosine(527) in 16S rRNA + S-adenosyl-L-homocysteine. Functionally, specifically methylates the N7 position of guanine in position 527 of 16S rRNA. This is Ribosomal RNA small subunit methyltransferase G from Shewanella piezotolerans (strain WP3 / JCM 13877).